The primary structure comprises 707 residues: Choline transporter-like protein 4 (707 aa).

The Cytoplasmic portion of the chain corresponds to 1-32; the sequence is MGKKQKENEAYGNSAKYDPSFRGPIKNRGCTD. Residues 33–53 form a helical membrane-spanning segment; sequence IICCVLFLVFILGYIVVGLVA. Residues 54–227 lie on the Extracellular side of the membrane; the sequence is WVYGDPRQVL…KIFEDFAQSW (174 aa). N-linked (GlcNAc...) asparagine glycans are attached at residues asparagine 67, asparagine 185, asparagine 195, and asparagine 196. The helical transmembrane segment at 228 to 248 threads the bilayer; it reads YWILVALGVALVLSLLFILLL. Residues 249–250 are Cytoplasmic-facing; sequence RL. The chain crosses the membrane as a helical span at residues 251–271; sequence VAAPLVLLLIVGVLAVLAYGI. Residues 272-307 are Extracellular-facing; it reads YHCWQQYRELRDQGVSITQLGFTANLSAYQNVKETW. Residue asparagine 296 is glycosylated (N-linked (GlcNAc...) asparagine). The helical transmembrane segment at 308-328 threads the bilayer; the sequence is LAALIILAVLEGVLLLMLIFL. The Cytoplasmic portion of the chain corresponds to 329–356; that stretch reads RQRIRIAIALLKEASRAVGQMMSTMFYP. A helical membrane pass occupies residues 357-377; the sequence is LVTFVLLVICIGYWAVTALYL. Residues 378-452 lie on the Extracellular side of the membrane; the sequence is ATSGQPQYVY…GILGLFWTVN (75 aa). N-linked (GlcNAc...) asparagine glycans are attached at residues asparagine 391, asparagine 403, and asparagine 413. A helical membrane pass occupies residues 453 to 473; it reads WVLALGQCVLAGAFASFYWAF. Topologically, residues 474–498 are cytoplasmic; the sequence is HKPRDIPTFPLSSAFIRTLRYHTGS. The chain crosses the membrane as a helical span at residues 499 to 519; that stretch reads LAFGALILTLVQIARVILEYI. Topologically, residues 520–557 are extracellular; that stretch reads DHKLRGSQNPVARCIICCFKCCLWCLEKFIKFLNRNAY. Residues 558–578 form a helical membrane-spanning segment; the sequence is IMIAIYGKNFCVSAKNAFMLL. Residues 579–594 lie on the Cytoplasmic side of the membrane; sequence MRNVVRVVVLDKVTDL. Residues 595–615 form a helical membrane-spanning segment; the sequence is LLFFGKLLVVGGVGVLSFFFF. Over 616-635 the chain is Extracellular; sequence SGRIKGLGKDFKNPDLNYYW. Residues 636–656 form a helical membrane-spanning segment; the sequence is LPIMTSIMGAYVIASGFFSVF. Residues 657–707 are Cytoplasmic-facing; sequence GMCVDTLFLCFLEDLERNDGSQERPYYMPKALLKILGKKNEVPTGGKNRKK.

Belongs to the CTL (choline transporter-like) family. Post-translationally, N-glycosylated; N-glycosylation of Asn-67 and Asn-391 is required for a proper thiamine pyrophosphate uptake. As to expression, highly expressed in intestine, kidney and stomach. Also expressed in testis and lung.

The protein localises to the membrane. Its subcellular location is the apical cell membrane. The enzyme catalyses choline(out) + n H(+)(in) = choline(in) + n H(+)(out). The catalysed reaction is thiamine diphosphate(out) = thiamine diphosphate(in). Its function is as follows. Choline transporter that plays a role in the choline-acetylcholine system and is required to the efferent innervation of hair cells in the olivocochlear bundle for the maintenance of physiological function of outer hair cells and the protection of hair cells from acoustic injury. Also described as a thiamine pyrophosphate transporter in colon, may mediate the absorption of microbiota-generated thiamine pyrophosphate and contribute to host thiamine (vitamin B1) homeostasis. The chain is Choline transporter-like protein 4 from Rattus norvegicus (Rat).